The chain runs to 257 residues: V-type proton ATPase subunit D (257 aa).

A disordered region spans residues 211–233 (KKKDLKAKEAQKEENSANKTIME). The segment covering 216-226 (KAKEAQKEENS) has biased composition (basic and acidic residues).

It belongs to the V-ATPase D subunit family. In terms of assembly, V-ATPase is a heteromultimeric enzyme composed of a peripheral catalytic V1 complex (components A to H) attached to an integral membrane V0 proton pore complex (components: a, c, c', c'' and d).

Functionally, subunit of the peripheral V1 complex of vacuolar ATPase. Vacuolar ATPase is responsible for acidifying a variety of intracellular compartments in eukaryotic cells, thus providing most of the energy required for transport processes in the vacuolar system. This is V-type proton ATPase subunit D (atp6v1d) from Dictyostelium discoideum (Social amoeba).